The primary structure comprises 129 residues: Small ribosomal subunit protein uS8 (129 aa).

This sequence belongs to the universal ribosomal protein uS8 family. In terms of assembly, part of the 30S ribosomal subunit.

One of the primary rRNA binding proteins, it binds directly to 16S rRNA central domain where it helps coordinate assembly of the platform of the 30S subunit. This is Small ribosomal subunit protein uS8 from Thermofilum pendens (strain DSM 2475 / Hrk 5).